The following is a 378-amino-acid chain: Ribosomal RNA large subunit methyltransferase G (378 aa).

It belongs to the methyltransferase superfamily. RlmG family.

Its subcellular location is the cytoplasm. It carries out the reaction guanosine(1835) in 23S rRNA + S-adenosyl-L-methionine = N(2)-methylguanosine(1835) in 23S rRNA + S-adenosyl-L-homocysteine + H(+). Specifically methylates the guanine in position 1835 (m2G1835) of 23S rRNA. This chain is Ribosomal RNA large subunit methyltransferase G, found in Shewanella putrefaciens (strain CN-32 / ATCC BAA-453).